We begin with the raw amino-acid sequence, 250 residues long: Proteasome subunit alpha type-7-B (250 aa).

A Glycyl lysine isopeptide (Lys-Gly) (interchain with G-Cter in ubiquitin) cross-link involves residue K62.

It belongs to the peptidase T1A family. As to quaternary structure, component of the 20S core complex of the 26S proteasome. The 26S proteasome is composed of a core protease (CP), known as the 20S proteasome, capped at one or both ends by the 19S regulatory particle (RP/PA700). The 20S proteasome core is composed of 28 subunits that are arranged in four stacked rings, resulting in a barrel-shaped structure. The two end rings are each formed by seven alpha subunits, and the two central rings are each formed by seven beta subunits. The catalytic chamber with the active sites is on the inside of the barrel.

Its subcellular location is the cytoplasm. The protein resides in the nucleus. Its function is as follows. The proteasome is a multicatalytic proteinase complex which is characterized by its ability to cleave peptides with Arg, Phe, Tyr, Leu, and Glu adjacent to the leaving group at neutral or slightly basic pH. The proteasome has an ATP-dependent proteolytic activity. The chain is Proteasome subunit alpha type-7-B (PAD2) from Arabidopsis thaliana (Mouse-ear cress).